A 180-amino-acid chain; its full sequence is UPF0134 protein MPN_368 (180 aa).

The protein belongs to the UPF0134 family.

This chain is UPF0134 protein MPN_368, found in Mycoplasma pneumoniae (strain ATCC 29342 / M129 / Subtype 1) (Mycoplasmoides pneumoniae).